The chain runs to 122 residues: Large ribosomal subunit protein uL14c (122 aa).

Belongs to the universal ribosomal protein uL14 family. Part of the 50S ribosomal subunit.

Its subcellular location is the plastid. The protein localises to the chloroplast. In terms of biological role, binds to 23S rRNA. The protein is Large ribosomal subunit protein uL14c of Gracilaria tenuistipitata var. liui (Red alga).